The primary structure comprises 548 residues: Methyl-accepting chemotaxis protein HlyB (548 aa).

At 1–10 the chain is on the cytoplasmic side; that stretch reads MIINKFSLKW. Residues 11-31 traverse the membrane as a helical segment; that stretch reads MLAIAVAIPAIALLFVAFTSL. Residues 32 to 199 are Periplasmic-facing; that stretch reads NTMSVMQAQS…SFEAGRTKQM (168 aa). The chain crosses the membrane as a helical span at residues 200–220; it reads VIIAAGLIISFITSLVIITNL. The HAMP domain occupies 218–271; the sequence is TNLRSRVAYLKDRMSSAAANLSLRTRLELDGNDELCDIGKSFNAFIDKVHHSIE. Topologically, residues 221 to 548 are cytoplasmic; sequence RSRVAYLKDR…LDKLVGSFEL (328 aa). The region spanning 276–512 is the Methyl-accepting transducer domain; it reads NSKELATMAS…DINRNVEDIN (237 aa).

This sequence belongs to the methyl-accepting chemotaxis (MCP) protein family.

Its subcellular location is the cell inner membrane. In terms of biological role, chemotactic-signal transducers respond to changes in the concentration of attractants and repellents in the environment, transduce a signal from the outside to the inside of the cell, and facilitate sensory adaptation through the variation of the level of methylation. This Vibrio cholerae serotype O1 (strain ATCC 39315 / El Tor Inaba N16961) protein is Methyl-accepting chemotaxis protein HlyB (hlyB).